The following is a 636-amino-acid chain: Biosynthetic arginine decarboxylase (636 aa).

Lys101 is modified (N6-(pyridoxal phosphate)lysine). A substrate-binding site is contributed by 286–296 (FDVGGGLAVDY).

It belongs to the Orn/Lys/Arg decarboxylase class-II family. SpeA subfamily. Mg(2+) serves as cofactor. Pyridoxal 5'-phosphate is required as a cofactor.

It catalyses the reaction L-arginine + H(+) = agmatine + CO2. It participates in amine and polyamine biosynthesis; agmatine biosynthesis; agmatine from L-arginine: step 1/1. Catalyzes the biosynthesis of agmatine from arginine. The chain is Biosynthetic arginine decarboxylase from Shewanella frigidimarina (strain NCIMB 400).